The chain runs to 1026 residues: Lon protease homolog, mitochondrial (1026 aa).

Residues 1–29 (MLGTRVTRAVYTRAPLKLQLRALGLHRRY) constitute a mitochondrion transit peptide. 2 disordered regions span residues 29–55 (YVHNGSKNDEGSSTSTTTNKEENDKKL) and 185–206 (ASEETKDEETVDKTESATDKVS). The Lon N-terminal domain maps to 62-345 (MLALPISRRP…KSLLVLKKEL (284 aa)). Positions 185–194 (ASEETKDEET) are enriched in acidic residues. Residues 195 to 206 (VDKTESATDKVS) show a composition bias toward basic and acidic residues. 497–504 (GPPGVGKT) lines the ATP pocket. The interval 711 to 785 (TEPLVSTSEE…EEEEDTSMIV (75 aa)) is disordered. The span at 714–737 (LVSTSEEPQLSQTNQNISSSSAED) shows a compositional bias: polar residues. A Lon proteolytic domain is found at 815–1001 (TTPPGVIMGL…DDIYKRLFSG (187 aa)). Catalysis depends on residues Ser-907 and Lys-950.

It belongs to the peptidase S16 family. Homohexamer or homoheptamer. Organized in a ring with a central cavity.

The protein localises to the mitochondrion matrix. It catalyses the reaction Hydrolysis of proteins in presence of ATP.. In terms of biological role, ATP-dependent serine protease that mediates the selective degradation of misfolded, unassembled or oxidatively damaged polypeptides as well as certain short-lived regulatory proteins in the mitochondrial matrix. May also have a chaperone function in the assembly of inner membrane protein complexes. Participates in the regulation of mitochondrial gene expression and in the maintenance of the integrity of the mitochondrial genome. Binds to mitochondrial DNA in a site-specific manner. This chain is Lon protease homolog, mitochondrial, found in Candida glabrata (strain ATCC 2001 / BCRC 20586 / JCM 3761 / NBRC 0622 / NRRL Y-65 / CBS 138) (Yeast).